The sequence spans 800 residues: Phenylalanine--tRNA ligase beta subunit (800 aa).

The 116-residue stretch at 39–154 folds into the tRNA-binding domain; it reads TKDIKNLVVG…ESQVPGTDAL (116 aa). Residues 408 to 483 enclose the B5 domain; that stretch reads AFITPIDITA…RIYGYDDIPS (76 aa). 4 residues coordinate Mg(2+): D461, D467, E470, and E471. An FDX-ACB domain is found at 708–800; the sequence is PIFPGMSRDI…ALIEQGAVIR (93 aa).

This sequence belongs to the phenylalanyl-tRNA synthetase beta subunit family. Type 1 subfamily. Tetramer of two alpha and two beta subunits. Mg(2+) is required as a cofactor.

It localises to the cytoplasm. The catalysed reaction is tRNA(Phe) + L-phenylalanine + ATP = L-phenylalanyl-tRNA(Phe) + AMP + diphosphate + H(+). This Staphylococcus aureus (strain bovine RF122 / ET3-1) protein is Phenylalanine--tRNA ligase beta subunit.